A 502-amino-acid chain; its full sequence is ATP synthase subunit alpha (502 aa).

Residues 115 to 138 (VDGLGPIETTETRPIESPAPGVMD) are disordered. Residue 169-176 (GDRQTGKT) coordinates ATP.

Belongs to the ATPase alpha/beta chains family. F-type ATPases have 2 components, CF(1) - the catalytic core - and CF(0) - the membrane proton channel. CF(1) has five subunits: alpha(3), beta(3), gamma(1), delta(1), epsilon(1). CF(0) has three main subunits: a(1), b(2) and c(9-12). The alpha and beta chains form an alternating ring which encloses part of the gamma chain. CF(1) is attached to CF(0) by a central stalk formed by the gamma and epsilon chains, while a peripheral stalk is formed by the delta and b chains.

The protein localises to the cell membrane. The catalysed reaction is ATP + H2O + 4 H(+)(in) = ADP + phosphate + 5 H(+)(out). Produces ATP from ADP in the presence of a proton gradient across the membrane. The alpha chain is a regulatory subunit. This is ATP synthase subunit alpha from Geobacillus sp. (strain WCH70).